A 280-amino-acid polypeptide reads, in one-letter code: Pantothenate synthetase (280 aa).

Methionine 30–histidine 37 provides a ligand contact to ATP. Histidine 37 functions as the Proton donor in the catalytic mechanism. Glutamine 61 lines the (R)-pantoate pocket. Residue glutamine 61 coordinates beta-alanine. Glycine 147–aspartate 150 contacts ATP. (R)-pantoate is bound at residue glutamine 153. Residues valine 176 and methionine 184–arginine 187 contribute to the ATP site.

Belongs to the pantothenate synthetase family. Homodimer.

Its subcellular location is the cytoplasm. It carries out the reaction (R)-pantoate + beta-alanine + ATP = (R)-pantothenate + AMP + diphosphate + H(+). It functions in the pathway cofactor biosynthesis; (R)-pantothenate biosynthesis; (R)-pantothenate from (R)-pantoate and beta-alanine: step 1/1. In terms of biological role, catalyzes the condensation of pantoate with beta-alanine in an ATP-dependent reaction via a pantoyl-adenylate intermediate. The chain is Pantothenate synthetase from Thermotoga neapolitana.